Reading from the N-terminus, the 367-residue chain is 3-dehydroquinate synthase (367 aa).

NAD(+)-binding positions include aspartate 69–lysine 74, glycine 103–aspartate 107, threonine 127–threonine 128, lysine 140, and lysine 149. The Zn(2+) site is built by glutamate 182, histidine 245, and histidine 262.

Belongs to the sugar phosphate cyclases superfamily. Dehydroquinate synthase family. It depends on Co(2+) as a cofactor. Requires Zn(2+) as cofactor. The cofactor is NAD(+).

The protein resides in the cytoplasm. It catalyses the reaction 7-phospho-2-dehydro-3-deoxy-D-arabino-heptonate = 3-dehydroquinate + phosphate. It participates in metabolic intermediate biosynthesis; chorismate biosynthesis; chorismate from D-erythrose 4-phosphate and phosphoenolpyruvate: step 2/7. Functionally, catalyzes the conversion of 3-deoxy-D-arabino-heptulosonate 7-phosphate (DAHP) to dehydroquinate (DHQ). The sequence is that of 3-dehydroquinate synthase from Pseudomonas savastanoi pv. phaseolicola (strain 1448A / Race 6) (Pseudomonas syringae pv. phaseolicola (strain 1448A / Race 6)).